A 293-amino-acid polypeptide reads, in one-letter code: Energy-coupling factor transporter ATP-binding protein EcfA2 (293 aa).

In terms of domain architecture, ABC transporter spans 3 to 246 (ITFQKVEHRY…ADELEKIGVD (244 aa)). Position 40–47 (40–47 (GHTGSGKS)) interacts with ATP.

This sequence belongs to the ABC transporter superfamily. Energy-coupling factor EcfA family. Forms a stable energy-coupling factor (ECF) transporter complex composed of 2 membrane-embedded substrate-binding proteins (S component), 2 ATP-binding proteins (A component) and 2 transmembrane proteins (T component).

Its subcellular location is the cell membrane. ATP-binding (A) component of a common energy-coupling factor (ECF) ABC-transporter complex. Unlike classic ABC transporters this ECF transporter provides the energy necessary to transport a number of different substrates. The protein is Energy-coupling factor transporter ATP-binding protein EcfA2 of Bacillus cereus (strain ATCC 10987 / NRS 248).